Reading from the N-terminus, the 191-residue chain is NADH-quinone oxidoreductase subunit B (191 aa).

Positions 52, 53, 118, and 148 each coordinate [4Fe-4S] cluster.

It belongs to the complex I 20 kDa subunit family. NDH-1 is composed of 14 different subunits. Subunits NuoB, C, D, E, F, and G constitute the peripheral sector of the complex. [4Fe-4S] cluster is required as a cofactor.

Its subcellular location is the cell inner membrane. It carries out the reaction a quinone + NADH + 5 H(+)(in) = a quinol + NAD(+) + 4 H(+)(out). Its function is as follows. NDH-1 shuttles electrons from NADH, via FMN and iron-sulfur (Fe-S) centers, to quinones in the respiratory chain. The immediate electron acceptor for the enzyme in this species is believed to be a menaquinone. Couples the redox reaction to proton translocation (for every two electrons transferred, four hydrogen ions are translocated across the cytoplasmic membrane), and thus conserves the redox energy in a proton gradient. The protein is NADH-quinone oxidoreductase subunit B of Azobacteroides pseudotrichonymphae genomovar. CFP2.